Reading from the N-terminus, the 605-residue chain is MTALDGIEGLSECIGRAIQEHLARSNLNLAWPQIDSLDRPILRFEAFIEDAGAVSTVASRSEKIASRTLDLTGMKTPQPSRSPTVTRNVATPHAEALHDRDDQESADDDDDDLQDDAAAQTASRKGTGGLRVANSQLIREDLSENQRQMQVDSRTFPKRRKVASEKFVFQPSTLDKLIIGIWEQAIFEQFQVAPNSVSSVVRHAPMDAAPVALSVTTEPSGGSFSQMNVFCRKVTQASRVCRSIEIIVQARWTELFEEQVQARTAAHPELSSTKHRKGVFMEACQDFGWSEKELRNKMAIWRGYKDVKDAAGWAALVFAGMGIYRFCKYRVGFDKEAMRRLKNLRNRLEVAADTLHPHWRQLLAIVGEPQALKYPGHPHEWVVYEDGSDPVPLRQTYIEHDPFFSFEHIEESVVDGSVWGCEDPRWMPQESAITRASGTYMCALCNEQQSDEPKLNACFCFPSLFGCVKRKPPPVQIYRTAEGKNNGLIALTAFERGTAVGELVGLITNGVRHLDVMEGSTPLAKYQIWQGREGNYTRFANHSCKANAQTSNFTWLDTQRVILVSKGIEAGSEITVDYGDKYWAGLDKSCLCGETCCRYKRDGRR.

The interval 68 to 132 (TLDLTGMKTP…SRKGTGGLRV (65 aa)) is disordered. The segment covering 75-89 (KTPQPSRSPTVTRNV) has biased composition (polar residues). The segment covering 104 to 115 (ESADDDDDDLQD) has biased composition (acidic residues). One can recognise an SET domain in the interval 473–579 (PPVQIYRTAE…AGSEITVDYG (107 aa)).

It belongs to the class V-like SAM-binding methyltransferase superfamily.

In Phaeosphaeria nodorum (strain SN15 / ATCC MYA-4574 / FGSC 10173) (Glume blotch fungus), this protein is SET domain-containing protein SNOG_11806.